We begin with the raw amino-acid sequence, 494 residues long: Probable serine/threonine-protein kinase BSK3 (494 aa).

The N-myristoyl glycine moiety is linked to residue G2. One can recognise a Protein kinase domain in the interval 61-316 (ENIVSEHGEK…SLVQALAPLQ (256 aa)). ATP-binding positions include 67–75 (HGEKAPNVV) and K89. D183 (proton acceptor) is an active-site residue. Phosphoserine is present on residues S213 and S215. One copy of the TPR repeat lies at 423–456 (PTIYARRCLSYLMNDKAEQALSDAMQALVISPTW).

Interacts with BRI1 and BSL1. Post-translationally, phosphorylated at Ser-213 and Ser-215 by BRI1. Phosphorylation at Ser-215 is required for its function in the regulation of brassinosteroid signaling. Phosphorylation by BRI1 disrupts the interaction between its TPR and kinase domains, thereby increasing the binding between its kinase domain and BSL1.

It is found in the cell membrane. It carries out the reaction L-seryl-[protein] + ATP = O-phospho-L-seryl-[protein] + ADP + H(+). The enzyme catalyses L-threonyl-[protein] + ATP = O-phospho-L-threonyl-[protein] + ADP + H(+). In terms of biological role, probable serine/threonine kinase that acts as a positive regulator of brassinosteroid (BR) signaling downstream of BRI1. The polypeptide is Probable serine/threonine-protein kinase BSK3 (Oryza sativa subsp. japonica (Rice)).